The following is a 157-amino-acid chain: uncharacterized protein (157 aa).

To E.coli YcjD and H.influenzae HI_0925.

This is an uncharacterized protein from Haemophilus influenzae (strain ATCC 51907 / DSM 11121 / KW20 / Rd).